Here is a 207-residue protein sequence, read N- to C-terminus: MSNKDYKKLYLVTDYRIPFNELLEKTKEALIGGVSIVQYRAKNKETKEMCKEARALKKLCDEFGALFLVNDRIDVALAVKAHGVHIGQDDMDVSIAREIMPKDAIIGVTVHNKEEALKAIKDGADNLGVGALFSTNSKDDATLMTLETLREIKSVSNIPLYGIGGITPYNLNKDILENLDGVAVISALLNSDNIREKSKEFLNILSK.

4-amino-2-methyl-5-(diphosphooxymethyl)pyrimidine-binding positions include 38-42 (QYRAK) and Asn-70. Residues Asp-71 and Asp-90 each coordinate Mg(2+). Thr-109 contacts 4-amino-2-methyl-5-(diphosphooxymethyl)pyrimidine. Residue 135–137 (TNS) participates in 2-[(2R,5Z)-2-carboxy-4-methylthiazol-5(2H)-ylidene]ethyl phosphate binding. Lys-138 is a 4-amino-2-methyl-5-(diphosphooxymethyl)pyrimidine binding site. Residues Gly-165 and 185-186 (IS) each bind 2-[(2R,5Z)-2-carboxy-4-methylthiazol-5(2H)-ylidene]ethyl phosphate.

This sequence belongs to the thiamine-phosphate synthase family. The cofactor is Mg(2+).

The enzyme catalyses 2-[(2R,5Z)-2-carboxy-4-methylthiazol-5(2H)-ylidene]ethyl phosphate + 4-amino-2-methyl-5-(diphosphooxymethyl)pyrimidine + 2 H(+) = thiamine phosphate + CO2 + diphosphate. The catalysed reaction is 2-(2-carboxy-4-methylthiazol-5-yl)ethyl phosphate + 4-amino-2-methyl-5-(diphosphooxymethyl)pyrimidine + 2 H(+) = thiamine phosphate + CO2 + diphosphate. It carries out the reaction 4-methyl-5-(2-phosphooxyethyl)-thiazole + 4-amino-2-methyl-5-(diphosphooxymethyl)pyrimidine + H(+) = thiamine phosphate + diphosphate. The protein operates within cofactor biosynthesis; thiamine diphosphate biosynthesis; thiamine phosphate from 4-amino-2-methyl-5-diphosphomethylpyrimidine and 4-methyl-5-(2-phosphoethyl)-thiazole: step 1/1. Functionally, condenses 4-methyl-5-(beta-hydroxyethyl)thiazole monophosphate (THZ-P) and 2-methyl-4-amino-5-hydroxymethyl pyrimidine pyrophosphate (HMP-PP) to form thiamine monophosphate (TMP). This chain is Thiamine-phosphate synthase, found in Clostridium perfringens (strain SM101 / Type A).